Reading from the N-terminus, the 231-residue chain is Homeobox protein EMX1 (231 aa).

The homeobox DNA-binding region spans 133-192 (PKRIRTAFSPSQLLRLERAFEKNHYVVGAERKQLANSLSLSETQVKVWFQNRRTKYKRQK). Positions 193–231 (LEEEGPECTQKKKGNHHINRWRIATKQTGSEDIDVMSDA) are disordered. The segment covering 203-212 (KKKGNHHINR) has biased composition (basic residues).

It belongs to the EMX homeobox family.

Its subcellular location is the nucleus. In terms of biological role, may function in combinations with OTX1/2 to specify cell fates in the developing central nervous system. This chain is Homeobox protein EMX1 (emx1), found in Danio rerio (Zebrafish).